Consider the following 1040-residue polypeptide: Probable starch synthase 4, chloroplastic/amyloplastic (1040 aa).

A chloroplast-targeting transit peptide spans 1–42; the sequence is MTTKLSSFCFLTHGLAGISCEREHGSSRRFFYLPSRRLVSTS. The interval 43–142 is disordered; it reads CKMRQQRGFD…KSKTAKKKGE (100 aa). Basic and acidic residues-rich tracts occupy residues 52–61 and 112–124; these read DSSKRQEVKK and NHAD…KDDI. The stretch at 187-466 forms a coiled coil; sequence ELMTMIRSAE…EESKKKSRDE (280 aa). The ADP site is built by Lys556, Gly559, and Asp562. Residues Trp679 and Gln680 each contribute to the (1,4-alpha-D-glucosyl)n site. Positions 849, 854, 906, 908, 916, 933, and 934 each coordinate ADP.

The protein belongs to the glycosyltransferase 1 family. Bacterial/plant glycogen synthase subfamily. In terms of assembly, interacts with PTST2. Interacts with PII1; the interaction is essential for the initiation of starch granules biosynthesis in leaf chloroplasts. Expressed in leaves and flowers.

Its subcellular location is the plastid. It is found in the chloroplast. The protein localises to the amyloplast. The protein resides in the chloroplast stroma. The enzyme catalyses [(1-&gt;4)-alpha-D-glucosyl](n) + ADP-alpha-D-glucose = [(1-&gt;4)-alpha-D-glucosyl](n+1) + ADP + H(+). It participates in glycan biosynthesis; starch biosynthesis. In terms of biological role, probably involved in the priming of starch granule formation. May play a regulatory role in the control of starch accumulation in plastids. Is necessary and sufficient to establish the correct number of starch granules observed in chloroplasts. The sequence is that of Probable starch synthase 4, chloroplastic/amyloplastic from Arabidopsis thaliana (Mouse-ear cress).